A 571-amino-acid chain; its full sequence is Potassium-transporting ATPase potassium-binding subunit (571 aa).

11 helical membrane passes run 3 to 23 (LIGW…VKPL), 64 to 84 (LGYG…LYAI), 135 to 155 (LGLT…AVAL), 179 to 199 (LYVL…QGMP), 254 to 274 (LANL…TNVF), 284 to 304 (GWAI…VTYA), 330 to 350 (FGIV…CGAV), 357 to 376 (FTAL…EIIV), 421 to 441 (MLAI…ATVL), 488 to 508 (LALG…AIAG), and 527 to 547 (GGLF…LTFF).

This sequence belongs to the KdpA family. The system is composed of three essential subunits: KdpA, KdpB and KdpC.

It localises to the cell inner membrane. Part of the high-affinity ATP-driven potassium transport (or Kdp) system, which catalyzes the hydrolysis of ATP coupled with the electrogenic transport of potassium into the cytoplasm. This subunit binds the periplasmic potassium ions and delivers the ions to the membrane domain of KdpB through an intramembrane tunnel. This chain is Potassium-transporting ATPase potassium-binding subunit, found in Methylorubrum populi (strain ATCC BAA-705 / NCIMB 13946 / BJ001) (Methylobacterium populi).